A 613-amino-acid chain; its full sequence is Sulfhydryl oxidase 1 (613 aa).

Residues 1–30 (MTGCGRRSGWLPPLRLLLLPLLLGGPGVGA) form the signal peptide. In terms of domain architecture, Thioredoxin spans 37-157 (YSASDPLTLL…RERLIDALES (121 aa)). Residues C71 and C74 each act as nucleophile in the active site. Cystine bridges form between C71–C74 and C102–C111. Residues N131 and N244 are each glycosylated (N-linked (GlcNAc...) asparagine). Cysteines 394 and 406 form a disulfide. An ERV/ALR sulfhydryl oxidase domain is found at 397–504 (SESHFRGFPC…EDPQFPKVQW (108 aa)). FAD-binding residues include R402, W409, and H413. The residue at position 427 (S427) is a Phosphoserine. C450 and C453 form a disulfide bridge. FAD is bound by residues D452, H456, 479–486 (WTSHNRVN), K501, and W504. An intrachain disulfide couples C510 to C513.

Belongs to the quiescin-sulfhydryl oxidase (QSOX) family. In terms of assembly, monomer. FAD is required as a cofactor. In terms of processing, N-glycosylated. O-glycosylated on Thr and Ser residues. Detected in endometrium and in uterus glandular epithelial cells (at protein level). Expressed in testis, placenta, pancreas, lung, ovary, endometrium, but not in brain, liver and kidney tissues. Higher expression in epithelial cells.

It localises to the secreted. The enzyme catalyses 2 R'C(R)SH + O2 = R'C(R)S-S(R)CR' + H2O2. Catalyzes the oxidation of sulfhydryl groups in peptide and protein thiols to disulfides with the reduction of oxygen to hydrogen peroxide. Plays a role in disulfide bond formation in a variety of extracellular proteins. In fibroblasts, required for normal incorporation of laminin into the extracellular matrix, and thereby for normal cell-cell adhesion and cell migration. The polypeptide is Sulfhydryl oxidase 1 (QSOX1) (Cavia porcellus (Guinea pig)).